The chain runs to 142 residues: Large ribosomal subunit protein uL11 (142 aa).

The protein belongs to the universal ribosomal protein uL11 family. In terms of assembly, part of the ribosomal stalk of the 50S ribosomal subunit. Interacts with L10 and the large rRNA to form the base of the stalk. L10 forms an elongated spine to which L12 dimers bind in a sequential fashion forming a multimeric L10(L12)X complex. One or more lysine residues are methylated.

In terms of biological role, forms part of the ribosomal stalk which helps the ribosome interact with GTP-bound translation factors. The chain is Large ribosomal subunit protein uL11 from Hamiltonella defensa subsp. Acyrthosiphon pisum (strain 5AT).